Here is a 428-residue protein sequence, read N- to C-terminus: GTPase Obg (428 aa).

The Obg domain maps to 1-158 (MFVDQVKVYV…RYIVLELKVL (158 aa)). Residues 117–143 (ARGGRGGRGNSRFATPANPAPQLSENG) form a disordered region. Positions 159–329 (ADVGLVGFPS…LLFEVANQLE (171 aa)) constitute an OBG-type G domain. Residues 165 to 172 (GFPSVGKS), 190 to 194 (FTTLV), 212 to 215 (DLPG), 282 to 285 (NKMD), and 310 to 312 (SAV) contribute to the GTP site. Mg(2+)-binding residues include Ser172 and Thr192. In terms of domain architecture, OCT spans 350 to 428 (TMENEEVPFN…LLEFEFEFID (79 aa)).

It belongs to the TRAFAC class OBG-HflX-like GTPase superfamily. OBG GTPase family. As to quaternary structure, monomer. Interacts with TasA (AC P54507) in pull-down experiments. It depends on Mg(2+) as a cofactor.

The protein resides in the cytoplasm. Its activity is regulated as follows. Inhibited by GDP; less than 20 uM ppGpp stimulates the GTPase, while higher concentrations inhibit. Necessary for the transition from vegetative growth to stage 0 or stage II of sporulation, but sporulation subsequent to these stages is unaffected at 45 degrees Celsius. This ts effect is probably due solely to the E-79 mutation. Required for expression of early sporulation genes, further suggesting a role in the induction of sporulation. Depletion effects on sporulation can be partially suppressed by missense mutations in spo0A. Strains depleted for obg stop growing after about 3 hours and do not induce the sigma-B factor following ethanol stress. It cofractionates with the ribosome and upstream stress response regulators RsbR, RsbS and RsbT in size fractionation columns, suggesting the ribosome might serve as a possible mediator of the activity of obg and the stress induction of sigma-B. In glycerol gradients partially associates with ribosomes; this is stabilized by a nonhydrolyzable GTP-analog and to a lesser extent GTP and GDP. Functionally, an essential GTPase which binds GTP, GDP and possibly (p)ppGpp with moderate affinity, with high nucleotide exchange rates and a fairly low GTP hydrolysis rate. Plays a role in control of the cell cycle, stress response, ribosome biogenesis and in those bacteria that undergo differentiation, in morphogenesis control. The polypeptide is GTPase Obg (Bacillus subtilis (strain 168)).